Here is a 407-residue protein sequence, read N- to C-terminus: Proteasome-activating nucleotidase (407 aa).

The stretch at 22–67 forms a coiled coil; sequence KEKTQIAELESKVLRLELKNKDVTRENVQIKKENEILKRELDKLRI. Residues 192–197 and H331 each bind ATP; that span reads GTGKTL. The tract at residues 405–407 is docks into pockets in the proteasome alpha-ring to cause gate opening; that stretch reads MYG.

This sequence belongs to the AAA ATPase family. As to quaternary structure, homohexamer. The hexameric complex has a two-ring architecture resembling a top hat that caps the 20S proteasome core at one or both ends. Upon ATP-binding, the C-terminus of PAN interacts with the alpha-rings of the proteasome core by binding to the intersubunit pockets.

The protein localises to the cytoplasm. In terms of biological role, ATPase which is responsible for recognizing, binding, unfolding and translocation of substrate proteins into the archaeal 20S proteasome core particle. Is essential for opening the gate of the 20S proteasome via an interaction with its C-terminus, thereby allowing substrate entry and access to the site of proteolysis. Thus, the C-termini of the proteasomal ATPase function like a 'key in a lock' to induce gate opening and therefore regulate proteolysis. Unfolding activity requires energy from ATP hydrolysis, whereas ATP binding alone promotes ATPase-20S proteasome association which triggers gate opening, and supports translocation of unfolded substrates. This is Proteasome-activating nucleotidase from Methanococcus maripaludis (strain C7 / ATCC BAA-1331).